The primary structure comprises 469 residues: 3-isopropylmalate dehydratase large subunit (469 aa).

The [4Fe-4S] cluster site is built by C350, C410, and C413.

This sequence belongs to the aconitase/IPM isomerase family. LeuC type 1 subfamily. In terms of assembly, heterodimer of LeuC and LeuD. Requires [4Fe-4S] cluster as cofactor.

It catalyses the reaction (2R,3S)-3-isopropylmalate = (2S)-2-isopropylmalate. Its pathway is amino-acid biosynthesis; L-leucine biosynthesis; L-leucine from 3-methyl-2-oxobutanoate: step 2/4. Functionally, catalyzes the isomerization between 2-isopropylmalate and 3-isopropylmalate, via the formation of 2-isopropylmaleate. The sequence is that of 3-isopropylmalate dehydratase large subunit from Brucella anthropi (strain ATCC 49188 / DSM 6882 / CCUG 24695 / JCM 21032 / LMG 3331 / NBRC 15819 / NCTC 12168 / Alc 37) (Ochrobactrum anthropi).